An 880-amino-acid polypeptide reads, in one-letter code: MDVITTHVNADFDCLGAMVAASKLYPDALMVFSGSQEKSMRDLFLKTTGYALPFTRLRDVDFSDITRLVLVDCQHTSRIGRFAEVARRPGVEVHIYDHHPGSSGDIRPSGGEIRDCGSSTTILTRKLMEQGIEVTAVEATLMMLGIYEDTGNLTFPSTTPEDYAAASWLLERGANLNIVSDFVSQELTAEQVALLNDLLKSLRSTPVNGVDIAVAHATLDHYVGDIAVLAHMMRDMQNLDAIFLVVGMGERVYLVARSRIAEVDAGAVMRVFGGGGHATAAAATVRDQTVIQVLGRLNRLLPELVNPVRTAADLMSSPVITLPLATTITEAREILTRYNVNAMPVMDGERMAGIISRRIVEKALYHGLGNLPVDEYMHTEFLRAAPDTPINAIQDYIVGQHRRLVPVFSGERLVGVITRTDLLRYMYTGTQRNAEPVYDLGSENLPVRRREVVHLMNRHLPRPTVAMLRDLGKVGDELELPVYAVGGFVRDLLLGAENDDIDVSVEGDGILFAETVANRVGCRVKSHAKFGTAVIVFPDGLKVDVASTRLEYYETPGALPTVERSSLKMDLYRRDFTINTLAVKLNAEGFGTLIDYFGAYRDLQEKTIRVLHNLSFVEDPTRVFRAIRFEQRLGFPISRHTENLIKNAVKMGFLDKLGGRRLLNELVLILREREPVKAILRMSGLGLLRFIHPDLVLAPNTLQVLDEVKKVITWFDLLYLGEKVETWVVYFLALTSSLPDEGFWGTCTRLSVSEHYREKLIDMRVHGEQVLEVMTRKAARREDVRRSDIYFWLRGLSPEVLLYIMAKTRSDEVRRYVSLYVTQLRGIVTHITGDDLKTLGIPSGPRYREILDRVLTARLNGEAATRDDEMRIAVRLADSA.

2 CBS domains span residues 315 to 373 and 377 to 435; these read MSSP…NLPV and MHTE…RNAE. 487–490 lines the ATP pocket; it reads GFVR. Mg(2+) is bound by residues D500 and D502. ATP is bound by residues 574–575, N579, 619–628, R632, and R661; these read RD and DPTRVFRAIR.

This sequence belongs to the tRNA nucleotidyltransferase/poly(A) polymerase family. The cofactor is Mg(2+).

It catalyses the reaction a tRNA with a 3' CC end + ATP = a tRNA with a 3' CCA end + diphosphate. TRNA nucleotidyltransferase involved in the synthesis of the tRNA CCA terminus. Adds the terminal adenosine residue to tRNA. The polypeptide is A-adding tRNA nucleotidyltransferase (Geobacter sulfurreducens (strain ATCC 51573 / DSM 12127 / PCA)).